The sequence spans 174 residues: tRNA (cytidine(56)-2'-O)-methyltransferase (174 aa).

S-adenosyl-L-methionine-binding positions include Leu80, 105–109, and 123–130; these read GAEKV and ISNQPHSE.

The protein belongs to the aTrm56 family. Homodimer.

The protein resides in the cytoplasm. It carries out the reaction cytidine(56) in tRNA + S-adenosyl-L-methionine = 2'-O-methylcytidine(56) in tRNA + S-adenosyl-L-homocysteine + H(+). Specifically catalyzes the AdoMet-dependent 2'-O-ribose methylation of cytidine at position 56 in tRNAs. In Metallosphaera sedula (strain ATCC 51363 / DSM 5348 / JCM 9185 / NBRC 15509 / TH2), this protein is tRNA (cytidine(56)-2'-O)-methyltransferase.